The chain runs to 190 residues: Potassium-transporting ATPase KdpC subunit (190 aa).

The helical transmembrane segment at 13 to 33 (VGFLLLTLMCGVVYPGIVTIF) threads the bilayer.

This sequence belongs to the KdpC family. The system is composed of three essential subunits: KdpA, KdpB and KdpC.

The protein resides in the cell membrane. Part of the high-affinity ATP-driven potassium transport (or Kdp) system, which catalyzes the hydrolysis of ATP coupled with the electrogenic transport of potassium into the cytoplasm. This subunit acts as a catalytic chaperone that increases the ATP-binding affinity of the ATP-hydrolyzing subunit KdpB by the formation of a transient KdpB/KdpC/ATP ternary complex. The polypeptide is Potassium-transporting ATPase KdpC subunit (Listeria monocytogenes serotype 4a (strain HCC23)).